We begin with the raw amino-acid sequence, 145 residues long: Trafficking protein particle complex subunit 1 (145 aa).

Belongs to the TRAPP small subunits family. BET5 subfamily. Part of the multisubunit transport protein particle (TRAPP) complex. The heterodimer TRAPPC6B-TRAPPC3 interacts with TRAPPC1 likely providing a core for TRAPP complex formation.

The protein localises to the golgi apparatus. It is found in the cis-Golgi network. It localises to the endoplasmic reticulum. In terms of biological role, may play a role in vesicular transport from endoplasmic reticulum to Golgi. This chain is Trafficking protein particle complex subunit 1 (TRAPPC1), found in Bos taurus (Bovine).